A 484-amino-acid polypeptide reads, in one-letter code: Glutamate--tRNA ligase (484 aa).

Residues 11 to 21 carry the 'HIGH' region motif; that stretch reads PSPTGLLHIGN. The short motif at 255–259 is the 'KMSKS' region element; that stretch reads KLSKR. Lysine 258 is a binding site for ATP.

The protein belongs to the class-I aminoacyl-tRNA synthetase family. Glutamate--tRNA ligase type 1 subfamily. Monomer.

The protein resides in the cytoplasm. The catalysed reaction is tRNA(Glu) + L-glutamate + ATP = L-glutamyl-tRNA(Glu) + AMP + diphosphate. Functionally, catalyzes the attachment of glutamate to tRNA(Glu) in a two-step reaction: glutamate is first activated by ATP to form Glu-AMP and then transferred to the acceptor end of tRNA(Glu). The polypeptide is Glutamate--tRNA ligase (Streptococcus agalactiae serotype V (strain ATCC BAA-611 / 2603 V/R)).